A 338-amino-acid chain; its full sequence is MKVFYDKDCDLSLIKGKTVAIIGYGSQGHAHAQNLNDSGVKVVVGLRKGGASWPKVEKAGLQVAEVADAVKAADVVMILLPDEQIGAVYKNDVAPNIKQGASLVFAHGFNVHYGAVIPRDDLDVWMVAPKAPGHTVRNTYTQGGGVPHLVAVHQDKSGKARDLALSYAMANGGGKAGIIETNFREETETDLFGEQAVLCGGAVELIKAGFETLVEAGYAPEMAYFECLHELKLIVDLIYEGGIANMNYSISNNAEYGEYVTGPRIVTEDTKNAMRAVLKDIQTGEYAKSFLLENIAGAPTLISRRRLNAEHQIEQVGGKLRAMMPWIAKNKLVDQTRN.

Residues 1 to 181 enclose the KARI N-terminal Rossmann domain; the sequence is MKVFYDKDCD…GGGKAGIIET (181 aa). Residues 24–27, R47, and S52 contribute to the NADP(+) site; that span reads YGSQ. Residue H107 is part of the active site. G133 is a binding site for NADP(+). The region spanning 182–327 is the KARI C-terminal knotted domain; the sequence is NFREETETDL…GKLRAMMPWI (146 aa). Mg(2+)-binding residues include D190, E194, E226, and E230. Position 251 (S251) interacts with substrate.

The protein belongs to the ketol-acid reductoisomerase family. The cofactor is Mg(2+).

It catalyses the reaction (2R)-2,3-dihydroxy-3-methylbutanoate + NADP(+) = (2S)-2-acetolactate + NADPH + H(+). It carries out the reaction (2R,3R)-2,3-dihydroxy-3-methylpentanoate + NADP(+) = (S)-2-ethyl-2-hydroxy-3-oxobutanoate + NADPH + H(+). The protein operates within amino-acid biosynthesis; L-isoleucine biosynthesis; L-isoleucine from 2-oxobutanoate: step 2/4. It participates in amino-acid biosynthesis; L-valine biosynthesis; L-valine from pyruvate: step 2/4. Involved in the biosynthesis of branched-chain amino acids (BCAA). Catalyzes an alkyl-migration followed by a ketol-acid reduction of (S)-2-acetolactate (S2AL) to yield (R)-2,3-dihydroxy-isovalerate. In the isomerase reaction, S2AL is rearranged via a Mg-dependent methyl migration to produce 3-hydroxy-3-methyl-2-ketobutyrate (HMKB). In the reductase reaction, this 2-ketoacid undergoes a metal-dependent reduction by NADPH to yield (R)-2,3-dihydroxy-isovalerate. The sequence is that of Ketol-acid reductoisomerase (NADP(+)) from Polaromonas naphthalenivorans (strain CJ2).